A 321-amino-acid chain; its full sequence is Lipoyl synthase (321 aa).

[4Fe-4S] cluster is bound by residues cysteine 60, cysteine 65, cysteine 71, cysteine 86, cysteine 90, cysteine 93, and serine 299. A Radical SAM core domain is found at 72-288 (WEKKHATFMI…ETIGRTKGFL (217 aa)).

It belongs to the radical SAM superfamily. Lipoyl synthase family. [4Fe-4S] cluster serves as cofactor.

The protein resides in the cytoplasm. The enzyme catalyses [[Fe-S] cluster scaffold protein carrying a second [4Fe-4S](2+) cluster] + N(6)-octanoyl-L-lysyl-[protein] + 2 oxidized [2Fe-2S]-[ferredoxin] + 2 S-adenosyl-L-methionine + 4 H(+) = [[Fe-S] cluster scaffold protein] + N(6)-[(R)-dihydrolipoyl]-L-lysyl-[protein] + 4 Fe(3+) + 2 hydrogen sulfide + 2 5'-deoxyadenosine + 2 L-methionine + 2 reduced [2Fe-2S]-[ferredoxin]. It participates in protein modification; protein lipoylation via endogenous pathway; protein N(6)-(lipoyl)lysine from octanoyl-[acyl-carrier-protein]: step 2/2. In terms of biological role, catalyzes the radical-mediated insertion of two sulfur atoms into the C-6 and C-8 positions of the octanoyl moiety bound to the lipoyl domains of lipoate-dependent enzymes, thereby converting the octanoylated domains into lipoylated derivatives. This Mesorhizobium japonicum (strain LMG 29417 / CECT 9101 / MAFF 303099) (Mesorhizobium loti (strain MAFF 303099)) protein is Lipoyl synthase.